Reading from the N-terminus, the 162-residue chain is RNA pyrophosphohydrolase (162 aa).

The Nudix hydrolase domain maps to 7 to 149; that stretch reads KYRPCVGIML…KKEVYKTVIE (143 aa). The short motif at 40–61 is the Nudix box element; that stretch reads GGVDDGEELEQAALRELLEEVG.

Belongs to the Nudix hydrolase family. RppH subfamily. A divalent metal cation is required as a cofactor.

Its function is as follows. Accelerates the degradation of transcripts by removing pyrophosphate from the 5'-end of triphosphorylated RNA, leading to a more labile monophosphorylated state that can stimulate subsequent ribonuclease cleavage. The polypeptide is RNA pyrophosphohydrolase (Wolbachia pipientis wMel).